Consider the following 755-residue polypeptide: 3-isopropylmalate dehydratase (755 aa).

Positions 353, 413, and 416 each coordinate [4Fe-4S] cluster. 3 disordered regions span residues 427-446 (GERC…GAGG), 471-493 (LTPA…ELEP), and 510-529 (DAPA…AAGM). Over residues 510 to 528 (DAPATGASPPSPAPSDAAG) the composition is skewed to low complexity.

This sequence belongs to the aconitase/IPM isomerase family. In terms of assembly, monomer. [4Fe-4S] cluster is required as a cofactor.

It carries out the reaction (2R,3S)-3-isopropylmalate = (2S)-2-isopropylmalate. Its pathway is amino-acid biosynthesis; L-leucine biosynthesis; L-leucine from 3-methyl-2-oxobutanoate: step 2/4. Functionally, catalyzes the isomerization between 2-isopropylmalate and 3-isopropylmalate, via the formation of 2-isopropylmaleate. The polypeptide is 3-isopropylmalate dehydratase (LEUA) (Rhizomucor pusillus).